A 372-amino-acid polypeptide reads, in one-letter code: DNA polymerase delta subunit 3 (372 aa).

2 disordered regions span residues 156-264 and 352-372; these read KKAP…NLDS and KKNT…FGKK. The span at 160–173 shows a compositional bias: polar residues; sequence STHSPQLSVPSKTS. Ser163 bears the Phosphoserine mark. 2 stretches are compositionally biased toward basic and acidic residues: residues 174 to 190 and 209 to 239; these read TIDK…KGKD and APLE…DDLK. A compositionally biased stretch (polar residues) spans 355–365; it reads TAQSKPQQKSI.

As to quaternary structure, heterotetramer that consist of the pol3, cdc1, cdc27 and cdm1 subunits. Cdc27 interacts with cdc1 and is required for dimerization of the tetramer.

The protein resides in the nucleus. The protein is DNA polymerase delta subunit 3 (cdc27) of Schizosaccharomyces pombe (strain 972 / ATCC 24843) (Fission yeast).